We begin with the raw amino-acid sequence, 322 residues long: Undecaprenyl-phosphate 4-deoxy-4-formamido-L-arabinose transferase (322 aa).

The Cytoplasmic portion of the chain corresponds to Met1 to Met235. Residues Leu236–Ile256 traverse the membrane as a helical segment. Topologically, residues Leu257–Gly269 are periplasmic. A helical membrane pass occupies residues Val270–Leu290. At Leu291–Glu322 the chain is on the cytoplasmic side.

It belongs to the glycosyltransferase 2 family.

The protein localises to the cell inner membrane. The catalysed reaction is UDP-4-deoxy-4-formamido-beta-L-arabinose + di-trans,octa-cis-undecaprenyl phosphate = 4-deoxy-4-formamido-alpha-L-arabinopyranosyl di-trans,octa-cis-undecaprenyl phosphate + UDP. Its pathway is glycolipid biosynthesis; 4-amino-4-deoxy-alpha-L-arabinose undecaprenyl phosphate biosynthesis; 4-amino-4-deoxy-alpha-L-arabinose undecaprenyl phosphate from UDP-4-deoxy-4-formamido-beta-L-arabinose and undecaprenyl phosphate: step 1/2. It participates in bacterial outer membrane biogenesis; lipopolysaccharide biosynthesis. Its function is as follows. Catalyzes the transfer of 4-deoxy-4-formamido-L-arabinose from UDP to undecaprenyl phosphate. The modified arabinose is attached to lipid A and is required for resistance to polymyxin and cationic antimicrobial peptides. The polypeptide is Undecaprenyl-phosphate 4-deoxy-4-formamido-L-arabinose transferase (Escherichia coli O139:H28 (strain E24377A / ETEC)).